Consider the following 405-residue polypeptide: POC1 centriolar protein homolog A (405 aa).

7 WD repeats span residues 17–56 (GHRDAVTCVDFSLNTKHLASGSMDSTLMIWHMKPQSRAYR), 59–98 (GHKDAVTCVNFSPSGHLLASGSRDKTVRIWVPNVKGESTV), 101–140 (AHTATVRSVHFCSDGQSLVTASDDKTVKVWSTHRQRFLFS), 143–182 (QHINWVRCAKFSPDGRLIVSASDDKTVKLWDKTSRECIHS), 185–224 (EHGGFVTYVDFHPSGTCIAAAGMDNTVKVWDARTHRLLQH), 227–266 (LHSAAVNALSFHPSGNYLITASSDSTLKILDLMEGRLLYT), and 269–308 (GHQGPATTVAFSRTGEYFASGGSDEQVMVWKSNFDIVDYG). Residues 313–352 (RRPPPLTSSSGTLPKMDLPVPPGRDRSLESVQGEPQESIS) form a disordered region. Over residues 341 to 352 (ESVQGEPQESIS) the composition is skewed to polar residues. Residues 367 to 395 (QLDILTQTVSILEQRLTLTEDRLKQCLEN) are a coiled coil.

It belongs to the WD repeat POC1 family. In terms of assembly, interacts with POC1B. Widely expressed in embryonic and adult tissues.

The protein localises to the cytoplasm. It localises to the cytoskeleton. It is found in the microtubule organizing center. The protein resides in the centrosome. Its subcellular location is the centriole. The protein localises to the cilium basal body. It localises to the spindle pole. In terms of biological role, plays an important role in centriole assembly and/or stability and ciliogenesis. Involved in early steps of centriole duplication, as well as in the later steps of centriole length control. Acts in concert with POC1B to ensure centriole integrity and proper mitotic spindle formation. The sequence is that of POC1 centriolar protein homolog A (Poc1a) from Mus musculus (Mouse).